We begin with the raw amino-acid sequence, 364 residues long: CLIP domain-containing serine protease B15 (364 aa).

A signal peptide spans 1 to 19 (MRWLVCLIVSWCSLVPLGA). One can recognise a Clip domain in the interval 30-89 (PCQTPSGTAGTCEPVKNCSYVRKILKSPDFSHYDTTYLDTLKCGDLMVPMRKKPIPLLCC). 3 disulfides stabilise this stretch: C31–C88, C41–C72, and C47–C89. N46 is a glycosylation site (N-linked (GlcNAc...) asparagine). Positions 107–359 (IYFGEETERG…YLDWMETVMF (253 aa)) constitute a Peptidase S1 domain. N-linked (GlcNAc...) asparagine glycosylation is present at N131. C137 and C153 are disulfide-bonded. The active-site Charge relay system is the H152. Residues N171, N177, and N206 are each glycosylated (N-linked (GlcNAc...) asparagine). Catalysis depends on D212, which acts as the Charge relay system. The cysteines at positions 279 and 296 are disulfide-linked. 2 N-linked (GlcNAc...) asparagine glycosylation sites follow: N287 and N301. C306 and C335 are oxidised to a cystine. S310 serves as the catalytic Charge relay system.

The protein belongs to the peptidase S1 family. CLIP subfamily. N-glycosylated. Post-translationally, proteolytically cleaved. As to expression, expressed by a subpopulation of hemocytes.

It localises to the secreted. Its function is as follows. Serine protease. Plays a role in innate immunity against infections by parasite P.berghei and by Gram-negative bacteria such as E.coli. In response to P.berghei infection, contributes to the clearing of parasite ookinetes independent of melanization, an innate immune response which consists in the deposition of melanin pigments on invading pathogens and parasites. This Anopheles gambiae (African malaria mosquito) protein is CLIP domain-containing serine protease B15.